We begin with the raw amino-acid sequence, 25 residues long: Kunitz-type serine protease inhibitor RsTIS5 (25 aa).

A BPTI/Kunitz inhibitor domain is found at 1–25 (EAEPKPFNPVCYEPKEVGPCKAYVP).

Functionally, serine protease inhibitor. Inhibits trypsin, elastase and plasmin. Does not inhibit kallikrein. The chain is Kunitz-type serine protease inhibitor RsTIS5 from Rhipicephalus sanguineus (Brown dog tick).